The sequence spans 353 residues: Endophilin-A3 (353 aa).

Residues 1–21 form a membrane-binding amphipathic helix region; sequence MSVAGLKKQFHKASQLFSEKI. The 232-residue stretch at 18 to 249 folds into the BAR domain; that stretch reads SEKISGAEGT…LQNRINVASS (232 aa). The required for dimerization upon membrane association stretch occupies residues 60–87; that stretch reads PNPAYRAKLGMLNTMSKIRGQVKTTGYP. Positions 180–201 form a coiled coil; sequence DEEVKQAVEKFEESKELAERSM. The interval 218-254 is interaction with ARC; that stretch reads FVEAALDYHKQSTEILEDLQSKLQNRINVASSRPKRE. An SH3 domain is found at 291–350; that stretch reads VDQPCCQALYDFEPENEGELGFKEGDIITLTNQIDENWYEGMLNGESGFFPHNYVEVMVP.

Belongs to the endophilin family. In terms of assembly, interacts with ARC. Interacts with SYNJ1 and DNM1. As to expression, highest level in a region associated with endocytosis of yolk proteins in developing oocytes (at protein level). Highest level in small ovarian follicles. High levels in brain and testis. Lower level in adrenal glands.

Its subcellular location is the cytoplasm. The protein resides in the early endosome membrane. In terms of biological role, implicated in endocytosis. May recruit other proteins to membranes with high curvature. Implicated in endocytosis of yolk proteins during oogenesis. This is Endophilin-A3 from Gallus gallus (Chicken).